A 104-amino-acid polypeptide reads, in one-letter code: 11 kDa late embryogenesis abundant protein (104 aa).

The segment covering 1–24 (MQSGKNAAASAKETAANVAASAKA) has biased composition (low complexity). The tract at residues 1–104 (MQSGKNAAAS…TGHRTGTGGI (104 aa)) is disordered. Basic and acidic residues predominate over residues 25-74 (GMEKTKASLQEKGEKMTAHDPMQKEMAREKKEERKHEAEYEKQAAKEHNA). Residues 75–89 (AQKQTTGIGTGTHSY) show a composition bias toward polar residues.

It belongs to the LEA type 1 family. As to expression, maximally expressed in dry seeds. Also present in mid-maturation embryos.

LEA proteins are late embryonic proteins abundant in higher plant seed embryos. They may play an essential role in seed survival and in controlling water exchanges during seed desiccation and imbibition. This is 11 kDa late embryogenesis abundant protein from Helianthus annuus (Common sunflower).